Reading from the N-terminus, the 184-residue chain is Large ribosomal subunit protein uL6 (184 aa).

The protein belongs to the universal ribosomal protein uL6 family. In terms of assembly, part of the 50S ribosomal subunit.

Functionally, this protein binds to the 23S rRNA, and is important in its secondary structure. It is located near the subunit interface in the base of the L7/L12 stalk, and near the tRNA binding site of the peptidyltransferase center. The polypeptide is Large ribosomal subunit protein uL6 (Onion yellows phytoplasma (strain OY-M)).